The sequence spans 500 residues: Probable malate:quinone oxidoreductase (500 aa).

The protein belongs to the MQO family. FAD serves as cofactor.

It carries out the reaction (S)-malate + a quinone = a quinol + oxaloacetate. It participates in carbohydrate metabolism; tricarboxylic acid cycle; oxaloacetate from (S)-malate (quinone route): step 1/1. This chain is Probable malate:quinone oxidoreductase, found in Bacillus cytotoxicus (strain DSM 22905 / CIP 110041 / 391-98 / NVH 391-98).